The primary structure comprises 516 residues: Calcitonin receptor (516 aa).

An N-terminal signal peptide occupies residues 1 to 24 (MRFLLLNRFTLLLLLLVSPTPVLQ). Residues 25–146 (APTNLTDSGL…FTPDKLHNAY (122 aa)) lie on the Extracellular side of the membrane. Residues asparagine 28, asparagine 73, asparagine 125, and asparagine 130 are each glycosylated (N-linked (GlcNAc...) asparagine). 3 disulfide bridges follow: cysteine 55-cysteine 81, cysteine 72-cysteine 112, and cysteine 95-cysteine 134. The helical transmembrane segment at 147–169 (VLYYLALVGHSMSIAALIASMGI) threads the bilayer. The Cytoplasmic portion of the chain corresponds to 170-181 (FLFFKNLSCQRV). The helical transmembrane segment at 182 to 202 (TLHKNMFLTYILNSIIIIIHL) threads the bilayer. The Extracellular segment spans residues 203–256 (VEVVPNGDLVRRDPMHIFHHNTYMWTMQWELSPPLPLSAHEGKMDPHDSEVISC). A disulfide bridge links cysteine 256 with cysteine 326. The helical transmembrane segment at 257-279 (KILHFFHQYMMACNYFWMLCEGI) threads the bilayer. The Cytoplasmic portion of the chain corresponds to 280–296 (YLHTLIVMAVFTEDQRL). The helical transmembrane segment at 297–317 (RWYYLLGWGFPIVPTIIHAIT) threads the bilayer. Residues 318–333 (RAVYYNDNCWLSTETH) are Extracellular-facing. The chain crosses the membrane as a helical span at residues 334–357 (LLYIIHGPVMAALVVNFFFLLNIV). At 358–377 (RVLVTKMRQTHEAEAYMYLK) the chain is on the cytoplasmic side. Residues 378–396 (AVKATMVLVPLLGIQFVVF) form a helical membrane-spanning segment. The Extracellular portion of the chain corresponds to 397-404 (PWRPSNKV). The helical transmembrane segment at 405–431 (LGKIYDYLMHSLIHFQGFFVATIYCFC) threads the bilayer. The Cytoplasmic portion of the chain corresponds to 432–516 (NHEVQVTLKR…MNVIQQDSSA (85 aa)). The tract at residues 489–516 (RNPPVSNNEGEEGTEMIPMNVIQQDSSA) is disordered.

This sequence belongs to the G-protein coupled receptor 2 family. Heterodimer of CALCR and RAMP1, RAMP2 or RAMP3; the receptor complexes function as AMYR1, AMYR2 and AMYR3 receptors, respectively, and respond to amylin/IAPP, calcitonin/CT and CGRP1 ligands. Interacts with GPRASP2.

The protein localises to the cell membrane. G protein-coupled receptor activated by ligand peptides amylin (IAPP), calcitonin (CT/CALCA) and calcitonin gene-related peptide type 1 (CGRP1/CALCA). CALCR interacts with receptor-activity-modifying proteins RAMP1, 2 and 3 to form receptor complexes AMYR1, 2 and 3, respectively. IAPP, CT and CGRP1 activate CALCR and AMYRs with distinct modes of receptor activation resulting in specific phenotypes. Ligand binding causes a conformation change that triggers signaling via guanine nucleotide-binding proteins (G proteins) and modulates the activity of downstream effectors. Activates cAMP-dependent pathway. This chain is Calcitonin receptor, found in Rattus norvegicus (Rat).